The following is a 301-amino-acid chain: Fluoroquinolones export ATP-binding protein MT2762 (301 aa).

One can recognise an ABC transporter domain in the interval 18-246 (IRVRGLTFRY…RSRRRVRVEY (229 aa)). ATP is bound at residue 52–59 (GPSGAGKS).

Belongs to the ABC transporter superfamily. In terms of assembly, the complex is composed of 2 ATP-binding proteins and 2 transmembrane proteins.

It localises to the cell membrane. In terms of biological role, part of the ABC transporter complex involved in fluoroquinolones export. Probably responsible for energy coupling to the transport system. The protein is Fluoroquinolones export ATP-binding protein MT2762 of Mycobacterium tuberculosis (strain CDC 1551 / Oshkosh).